The primary structure comprises 361 residues: 3-dehydroquinate synthase (361 aa).

This sequence belongs to the archaeal-type DHQ synthase family.

The enzyme catalyses 2-amino-2,3,7-trideoxy-D-lyxo-hept-6-ulosonate + NAD(+) + H2O = 3-dehydroquinate + NH4(+) + NADH + H(+). Functionally, catalyzes the oxidative deamination and cyclization of 2-amino-3,7-dideoxy-D-threo-hept-6-ulosonic acid (ADH) to yield 3-dehydroquinate (DHQ), which is fed into the canonical shikimic pathway of aromatic amino acid biosynthesis. This is 3-dehydroquinate synthase from Methanococcus vannielii (strain ATCC 35089 / DSM 1224 / JCM 13029 / OCM 148 / SB).